The primary structure comprises 603 residues: Prosaposin receptor GPR37 (603 aa).

Positions 1-26 (MPAPGAPLSRTSRLLLLLLFKVSVSA) are cleaved as a signal peptide. Residues 27–255 (ALSFVPEPRN…QESYGAYAVM (229 aa)) lie on the Extracellular side of the membrane. Asparagine 36 carries an N-linked (GlcNAc...) asparagine glycan. The interval 39–232 (CLGESCSPLI…GGPRRGNSTN (194 aa)) is disordered. Composition is skewed to basic and acidic residues over residues 51–79 (RSRDAGGPRNSARDALRVHVPREKLEAEV), 145–158 (TSERGEMSSKRDEI), and 165–175 (HSVKTEPEPRD). Residues asparagine 212 and asparagine 229 are each glycosylated (N-linked (GlcNAc...) asparagine). Residues 256–276 (CLSVVIFGTGIIGNLAVMCIV) traverse the membrane as a helical segment. Over 277–289 (CHNYYMRSISNSL) the chain is Cytoplasmic. A helical membrane pass occupies residues 290-310 (LANLAFWDFLIIFFCLPLVIF). At 311-325 (HELTKKWLLEDFSCK) the chain is on the extracellular side. Cysteine 324 and cysteine 409 form a disulfide bridge. Residues 326-346 (IVPYIEVASLGVTTFTLCALC) form a helical membrane-spanning segment. Topologically, residues 347–369 (IDRFRAATNVQMYYEMIENCSST) are cytoplasmic. Residues 370 to 390 (TAKLAVIWVGALLLALPEVVL) traverse the membrane as a helical segment. The Extracellular segment spans residues 391-433 (RQLSKEDLGFSGQAPAERCVIKISPDLPDTIYVLALTYDGARL). The chain crosses the membrane as a helical span at residues 434 to 454 (WWYFGCYFCLPTLFTITCSLV). Residues 455 to 483 (TARKIRKAEKASTRGNKRQIHLESQMNCT) are Cytoplasmic-facing. Residues 484 to 504 (VVALTILYGFCIIPENICNIV) form a helical membrane-spanning segment. Over 505–521 (TAYMATGVSQQTMDLLN) the chain is Extracellular. Residues 522 to 542 (IISQFLLFFKSCVTPVLLFCL) traverse the membrane as a helical segment. Topologically, residues 543-603 (CRPFSRAFME…STFASVGTHC (61 aa)) are cytoplasmic.

This sequence belongs to the G-protein coupled receptor 1 family. In terms of assembly, forms a complex with PRKN, STUB1 and HSP70. The amount of STUB1 in the complex increases during ER stress. STUB1 promotes the dissociation of HSP70 from PRKN, thus facilitating PRKN-mediated GPR37 ubiquitination. Interacts with PACRG. Post-translationally, the N-terminus is cleaved by ADAM10 metalloproteinase; mediating limited proteolysis leading to the release of receptor ectodomain by shedding. In addition, cleaved by FURIN between Arg-53 and Asp-54. In terms of processing, ubiquitinated by PRKN in the presence of UBE2E1 and UBE2L3 in the endoplasmic reticulum. The unfolded form is specifically ubiquitinated by SYVN1, which promotes its proteasomal degradation and prevents neuronal cell death. As to expression, highly expressed in the brain. High levels of expression were seen in fiber tracts such as the corpus callosum, anterior commissure, fornix, internal capsule, cerebral peduncles, and stria terminalis. Additionally, moderate levels of expression were seen in the pyramidal tracts and cerebellar peduncles, as well as in the spinal tract of the trigeminal nerve and the spinal fasciculi.

The protein localises to the cell projection. It is found in the dendrite. It localises to the synapse. The protein resides in the cell membrane. Its subcellular location is the endoplasmic reticulum membrane. Its function is as follows. G-protein-coupled receptor that plays a role in several physiological pathways such as resolution of inflammatory pain and oligodendrocyte differentiation. Acts as a receptor for several ligands including prosaposin, osteocalcin or neuroprotectin D1. Ligand binding induces endocytosis, followed by an ERK phosphorylation cascade. Acts as a receptor for osteocalcin (OCN) to regulate oligodendrocyte differentiation and central nervous system myelination. Mechanistically, plays a negative role in oligodendrocyte differentiation and myelination during development via activation of the ERK1/2 signaling pathway. Therefore, regulates the stability of myelin or resistance of myelin itself to demyelination. Upon activation by neuroprotectin D1 (NPD1), promotes the activation of phagocytosis in macrophages as well as the shift in cytokine release toward an anti-inflammatory profile, and thus helps to reverse inflammatory pain. In addition, the increased macrophage phagocytosis mediates protection against sepsis upon pathogen infection. Additionally, extracellular vesicles derived from efferocyte express prosaposin, which binds to macrophage GPR37 to increase expression of the efferocytosis receptor TIM4 via an ERK-AP1-dependent signaling axis, leading to increased macrophage efferocytosis efficiency and accelerated resolution of inflammation. May also act as a maturation factor of LRP6, protecting LRP6 from the endoplasmic reticulum (ER)-associated protein degradation (ERAD) and thereby promoting the Wnt/beta-catenin signaling pathway. The sequence is that of Prosaposin receptor GPR37 (Gpr37) from Rattus norvegicus (Rat).